A 355-amino-acid polypeptide reads, in one-letter code: tRNA pseudouridine synthase D (355 aa).

Catalysis depends on aspartate 84, which acts as the Nucleophile. Positions 160 to 306 (GVPNYFGLQR…MAHERRILRL (147 aa)) constitute a TRUD domain.

Belongs to the pseudouridine synthase TruD family.

It carries out the reaction uridine(13) in tRNA = pseudouridine(13) in tRNA. Responsible for synthesis of pseudouridine from uracil-13 in transfer RNAs. This is tRNA pseudouridine synthase D from Pseudomonas aeruginosa (strain UCBPP-PA14).